A 415-amino-acid polypeptide reads, in one-letter code: Branched-chain-amino-acid aminotransferase, cytosolic (415 aa).

K244 carries the N6-(pyridoxal phosphate)lysine modification.

It belongs to the class-IV pyridoxal-phosphate-dependent aminotransferase family. The cofactor is pyridoxal 5'-phosphate.

Its subcellular location is the cytoplasm. It catalyses the reaction L-leucine + 2-oxoglutarate = 4-methyl-2-oxopentanoate + L-glutamate. The catalysed reaction is L-isoleucine + 2-oxoglutarate = (S)-3-methyl-2-oxopentanoate + L-glutamate. It carries out the reaction L-valine + 2-oxoglutarate = 3-methyl-2-oxobutanoate + L-glutamate. In terms of biological role, catalyzes the first reaction in the catabolism of the essential branched chain amino acids leucine, isoleucine, and valine. This is Branched-chain-amino-acid aminotransferase, cytosolic (bcat-1) from Caenorhabditis elegans.